Consider the following 453-residue polypeptide: Bifunctional protein GlmU (453 aa).

The segment at 1-225 (MNIVILAAGT…EWETLGVNSK (225 aa)) is pyrophosphorylase. Residues 6–9 (LAAG), Lys20, Gln71, 76–77 (GT), 98–100 (YGD), Gly135, Glu150, Asn165, and Asn223 each bind UDP-N-acetyl-alpha-D-glucosamine. Asp100 provides a ligand contact to Mg(2+). Position 223 (Asn223) interacts with Mg(2+). Positions 226-246 (AQLAELERIHQRNVADALLVD) are linker. The N-acetyltransferase stretch occupies residues 247 to 453 (GVTLADPARV…GYVRPVKKKS (207 aa)). Residues Arg329 and Lys347 each contribute to the UDP-N-acetyl-alpha-D-glucosamine site. The Proton acceptor role is filled by His359. UDP-N-acetyl-alpha-D-glucosamine is bound by residues Tyr362 and Asn373. Acetyl-CoA-binding positions include Ala376, 382-383 (NY), Ser401, and Ala419.

It in the N-terminal section; belongs to the N-acetylglucosamine-1-phosphate uridyltransferase family. The protein in the C-terminal section; belongs to the transferase hexapeptide repeat family. Homotrimer. The cofactor is Mg(2+).

It is found in the cytoplasm. It carries out the reaction alpha-D-glucosamine 1-phosphate + acetyl-CoA = N-acetyl-alpha-D-glucosamine 1-phosphate + CoA + H(+). It catalyses the reaction N-acetyl-alpha-D-glucosamine 1-phosphate + UTP + H(+) = UDP-N-acetyl-alpha-D-glucosamine + diphosphate. It functions in the pathway nucleotide-sugar biosynthesis; UDP-N-acetyl-alpha-D-glucosamine biosynthesis; N-acetyl-alpha-D-glucosamine 1-phosphate from alpha-D-glucosamine 6-phosphate (route II): step 2/2. The protein operates within nucleotide-sugar biosynthesis; UDP-N-acetyl-alpha-D-glucosamine biosynthesis; UDP-N-acetyl-alpha-D-glucosamine from N-acetyl-alpha-D-glucosamine 1-phosphate: step 1/1. It participates in bacterial outer membrane biogenesis; LPS lipid A biosynthesis. In terms of biological role, catalyzes the last two sequential reactions in the de novo biosynthetic pathway for UDP-N-acetylglucosamine (UDP-GlcNAc). The C-terminal domain catalyzes the transfer of acetyl group from acetyl coenzyme A to glucosamine-1-phosphate (GlcN-1-P) to produce N-acetylglucosamine-1-phosphate (GlcNAc-1-P), which is converted into UDP-GlcNAc by the transfer of uridine 5-monophosphate (from uridine 5-triphosphate), a reaction catalyzed by the N-terminal domain. In Burkholderia orbicola (strain MC0-3), this protein is Bifunctional protein GlmU.